The primary structure comprises 357 residues: DNA replication and repair protein RecF (357 aa).

ATP is bound at residue Gly-30–Thr-37.

This sequence belongs to the RecF family.

It localises to the cytoplasm. Its function is as follows. The RecF protein is involved in DNA metabolism; it is required for DNA replication and normal SOS inducibility. RecF binds preferentially to single-stranded, linear DNA. It also seems to bind ATP. This is DNA replication and repair protein RecF from Shigella dysenteriae serotype 1 (strain Sd197).